Reading from the N-terminus, the 344-residue chain is Protease HtpX homolog (344 aa).

3 helical membrane-spanning segments follow: residues 8–28, 46–66, and 74–94; these read VALG…ATVA, ALTG…FVLV, and VSFL…TYVA. A Zn(2+)-binding site is contributed by His172. Residue Glu173 is part of the active site. Zn(2+) is bound at residue His176. The next 2 membrane-spanning stretches (helical) occupy residues 183-203 and 220-240; these read AIML…VTAV and LAVG…VLAF. Glu245 lines the Zn(2+) pocket.

This sequence belongs to the peptidase M48B family. Requires Zn(2+) as cofactor.

The protein resides in the cell membrane. This Pyrobaculum calidifontis (strain DSM 21063 / JCM 11548 / VA1) protein is Protease HtpX homolog.